Here is a 344-residue protein sequence, read N- to C-terminus: uncharacterized protein (344 aa).

Residues M1 to A28 form the signal peptide.

This sequence belongs to the bacterial solute-binding protein 1 family. WtpA subfamily.

This is an uncharacterized protein from Methanococcus maripaludis (strain C7 / ATCC BAA-1331).